The following is a 534-amino-acid chain: T-complex protein 1 subunit gamma (534 aa).

Methionine 1 bears the N-acetylmethionine mark. A Phosphoserine modification is found at serine 257. Cysteine 371 and cysteine 377 are joined by a disulfide.

This sequence belongs to the TCP-1 chaperonin family. Heterooligomeric complex of about 850 to 900 kDa that forms two stacked rings, 12 to 16 nm in diameter.

The protein localises to the cytoplasm. Molecular chaperone; assists the folding of proteins upon ATP hydrolysis. Known to play a role, in vitro, in the folding of actin and tubulin. In yeast may play a role in mitotic spindle formation. This chain is T-complex protein 1 subunit gamma (CCT3), found in Saccharomyces cerevisiae (strain ATCC 204508 / S288c) (Baker's yeast).